The sequence spans 141 residues: uncharacterized protein (141 aa).

It localises to the cytoplasm. This is an uncharacterized protein from Homo sapiens (Human).